A 360-amino-acid polypeptide reads, in one-letter code: Replication-associated protein (360 aa).

Residues 11–114 enclose the CRESS-DNA virus Rep endonuclease domain; it reads SHRNANTFLT…PLAVFERGTF (104 aa). An RCR-1 motif is present at residues 18–21; that stretch reads FLTY. A divalent metal cation is bound by residues Glu-52, His-60, and His-62. The short motif at 60-62 is the RCR-2 element; that stretch reads HLH. Tyr-100 serves as the catalytic For DNA cleavage activity. The short motif at 100–103 is the RCR-3 element; the sequence is YILK. Glu-104 lines the a divalent metal cation pocket. Residues 175–187 are oligomerization; sequence SANKLFPEIQEEF. 229–236 contributes to the ATP binding site; sequence GPTRTGKS. The tract at residues 252 to 270 is transactivation; the sequence is VDWSSYNEDAIYNIVDDIP. The Nuclear localization signal motif lies at 292 to 303; that stretch reads KYGKKKKVQKKS.

Belongs to the geminiviridae Rep protein family. In terms of assembly, homooligomer. Rep binds to repeated DNA motifs (iterons). Forms the O-complex, which is a Rep-DNA complex involved in the initiation of RCR. Part of the C- and V-complexes which are RepA-Rep-DNA complexes involved in the c-sense and v-sense transcription. The cofactor is Mg(2+). Requires Mn(2+) as cofactor.

Its subcellular location is the host nucleus. Its function is as follows. Essential for the replication of viral ssDNA. The closed circular ssDNA genome is first converted to a superhelical dsDNA. Rep binds a specific region at the genome origin of replication. It introduces an endonucleolytic nick within the conserved sequence 5'-TAATATTAC-3' in the intergenic region of the genome present in all geminiviruses, thereby initiating the rolling circle replication (RCR). Following cleavage, binds covalently to the 5'-phosphate of DNA as a tyrosyl ester. The cleavage gives rise to a free 3'-OH that serves as a primer for the cellular DNA polymerase. The polymerase synthesizes the (+) strand DNA by rolling circle mechanism. After one round of replication, a Rep-catalyzed nucleotidyl transfer reaction releases a circular single-stranded virus genome, thereby terminating the replication. Displays origin-specific DNA cleavage, nucleotidyl transferase, ATPase and helicase activities. Acts as an inhibitor of C-sense gene transcription. In Avena sativa (Oat), this protein is Replication-associated protein.